A 490-amino-acid polypeptide reads, in one-letter code: GTPase Der (490 aa).

2 EngA-type G domains span residues 3 to 166 (PVVA…MDDV) and 203 to 376 (IKLA…DSST). GTP is bound by residues 9-16 (GRPNVGKS), 56-60 (DTGGI), 118-121 (NKTD), 209-216 (GRPNVGKS), 256-260 (DTAGV), and 321-324 (NKWD). In terms of domain architecture, KH-like spans 377 to 461 (RRVSTAMLTR…PIRIQFKEGE (85 aa)).

Belongs to the TRAFAC class TrmE-Era-EngA-EngB-Septin-like GTPase superfamily. EngA (Der) GTPase family. As to quaternary structure, associates with the 50S ribosomal subunit.

Its function is as follows. GTPase that plays an essential role in the late steps of ribosome biogenesis. In Citrobacter koseri (strain ATCC BAA-895 / CDC 4225-83 / SGSC4696), this protein is GTPase Der.